The primary structure comprises 304 residues: Cell surface-binding protein OPG105 (304 aa).

Residues 1–235 (MPQQLSPINI…NDDTQVYYSG (235 aa)) form the Alpha-carbonic anhydrase domain. Topologically, residues 1-275 (MPQQLSPINI…YQKYIEENKT (275 aa)) are virion surface. Residues 276-294 (FAIIAIVFVFILTAILFFM) traverse the membrane as a helical segment. The Intravirion segment spans residues 295–304 (SRRYSREKQN).

It belongs to the alpha-carbonic anhydrase family. In terms of assembly, homodimer; disulfide-linked. Apparently non-glycosylated.

The protein localises to the virion membrane. Functionally, binds to chondroitin sulfate on the cell surface to provide virion attachment to target cell. The protein is Cell surface-binding protein OPG105 (OPG105) of Bos taurus (Bovine).